A 263-amino-acid polypeptide reads, in one-letter code: MKNAFKDALKAGRPQIGLWLGLANSYSAELLAGAGFDWLLIDGEHAPNNVQTVLTQLQAIAPYPSQPVVRPSWNDPVQIKQLLDVGAQTLLIPMVQNADEARNAVAATRYPPAGIRGVGSALARASRWNRIPEYLHLANDAMCVLVQIETREAMSNLASILDVDGIDGVFIGPADLSADMGFAGNPQHPEVQAAIENAIVQIRAAGKAPGILMANEALAKRYLELGALFVAVGVDTTLLARGAEALAARFGVEKKLSGASGVY.

Residue His45 is the Proton acceptor of the active site. Gln147 provides a ligand contact to substrate. A divalent metal cation is bound at residue Glu149. 2 residues coordinate substrate: Ala174 and Asp175. Asp175 provides a ligand contact to a divalent metal cation.

The protein belongs to the HpcH/HpaI aldolase family. Homohexamer; trimer of dimers. Requires a divalent metal cation as cofactor.

It carries out the reaction 4-hydroxy-2-oxoheptanedioate = succinate semialdehyde + pyruvate. It functions in the pathway aromatic compound metabolism; 4-hydroxyphenylacetate degradation; pyruvate and succinate semialdehyde from 4-hydroxyphenylacetate: step 7/7. In terms of biological role, catalyzes the reversible retro-aldol cleavage of 4-hydroxy-2-ketoheptane-1,7-dioate (HKHD) to pyruvate and succinic semialdehyde. This Salmonella typhimurium (strain LT2 / SGSC1412 / ATCC 700720) protein is 4-hydroxy-2-oxo-heptane-1,7-dioate aldolase.